The sequence spans 208 residues: Imidazoleglycerol-phosphate dehydratase (208 aa).

This sequence belongs to the imidazoleglycerol-phosphate dehydratase family.

Its subcellular location is the cytoplasm. It carries out the reaction D-erythro-1-(imidazol-4-yl)glycerol 3-phosphate = 3-(imidazol-4-yl)-2-oxopropyl phosphate + H2O. Its pathway is amino-acid biosynthesis; L-histidine biosynthesis; L-histidine from 5-phospho-alpha-D-ribose 1-diphosphate: step 6/9. The sequence is that of Imidazoleglycerol-phosphate dehydratase from Psychrobacter sp. (strain PRwf-1).